A 216-amino-acid polypeptide reads, in one-letter code: Outer-membrane lipoprotein LolB (216 aa).

Positions 1–21 (MLIFKICFYRLLPLSVLLLAA) are cleaved as a signal peptide. A lipid anchor (N-palmitoyl cysteine) is attached at cysteine 22. The S-diacylglycerol cysteine moiety is linked to residue cysteine 22.

This sequence belongs to the LolB family. As to quaternary structure, monomer.

The protein resides in the cell outer membrane. Plays a critical role in the incorporation of lipoproteins in the outer membrane after they are released by the LolA protein. The polypeptide is Outer-membrane lipoprotein LolB (Hamiltonella defensa subsp. Acyrthosiphon pisum (strain 5AT)).